A 290-amino-acid chain; its full sequence is Arylamine N-acetyltransferase 1 (290 aa).

Residue Met-1 is modified to N-acetylmethionine. Catalysis depends on Cys-68, which acts as the Acyl-thioester intermediate. Ser-103 contributes to the CoA binding site. Residue 106–107 (IH) coordinates substrate. Residues His-107 and Asp-122 contribute to the active site. 2 residues coordinate CoA: Tyr-208 and Ser-287.

This sequence belongs to the arylamine N-acetyltransferase family.

The protein resides in the cytoplasm. The catalysed reaction is an arylamine + acetyl-CoA = an N-acetylarylamine + CoA. Its function is as follows. Participates in the detoxification of a plethora of hydrazine and arylamine drugs. The polypeptide is Arylamine N-acetyltransferase 1 (NAT1) (Mesocricetus auratus (Golden hamster)).